Reading from the N-terminus, the 439-residue chain is Microfibrillar-associated protein 1 (439 aa).

2 disordered regions span residues 1–27 (MSVP…NEKG) and 39–200 (YVSG…PRLK). Ser-2 is subject to N-acetylserine. Ser-52 and Ser-53 each carry phosphoserine. Over residues 61 to 70 (QFIKKAKEQE) the composition is skewed to basic and acidic residues. A Glycyl lysine isopeptide (Lys-Gly) (interchain with G-Cter in SUMO2) cross-link involves residue Lys-67. Residues 71-81 (AEPEEQEEDSS) are compositionally biased toward acidic residues. A phosphoserine mark is found at Ser-94, Ser-116, Ser-118, Ser-132, and Ser-133. 2 stretches are compositionally biased toward acidic residues: residues 112-122 (VVGESDSEVEG) and 131-144 (DSSE…DDEE). The span at 145 to 163 (IERRRGMMRQRAQERKNEE) shows a compositional bias: basic and acidic residues. Over residues 178–195 (ESESESEYEEYTDSEDEM) the composition is skewed to acidic residues. A Glycyl lysine isopeptide (Lys-Gly) (interchain with G-Cter in SUMO2) cross-link involves residue Lys-249. Residue Thr-267 is modified to Phosphothreonine. Lys-357 participates in a covalent cross-link: Glycyl lysine isopeptide (Lys-Gly) (interchain with G-Cter in SUMO2). Ser-361 bears the Phosphoserine mark. Residues Lys-371, Lys-381, Lys-415, and Lys-418 each participate in a glycyl lysine isopeptide (Lys-Gly) (interchain with G-Cter in SUMO2) cross-link. Ser-432 carries the phosphoserine modification.

This sequence belongs to the MFAP1 family. As to quaternary structure, component of the spliceosome B complex. Interacts with PRPF38A (via N-terminal interaction domain).

The protein localises to the nucleus. In terms of biological role, involved in pre-mRNA splicing as a component of the spliceosome. In Homo sapiens (Human), this protein is Microfibrillar-associated protein 1.